The following is a 157-amino-acid chain: Thioredoxin-T (157 aa).

The 106-residue stretch at 2–107 (VYPVRNKDDL…LAKLMEKHAG (106 aa)) folds into the Thioredoxin domain. Residues C32 and C35 are joined by a disulfide bond. The segment at 132–157 (ESSESDNDNNNVNEVSAHDENAVLEH) is disordered. The segment covering 147–157 (SAHDENAVLEH) has biased composition (basic and acidic residues).

Belongs to the thioredoxin family. In terms of tissue distribution, testis specific. Not expressed in the embryo. Becomes progressively more strongly expressed during larval and pupal development. In testis, it is strongly expressed in young spermatocytes, and postmeiotic spermatid stages, then expression decreases at the nuclear elongation stage. Strongly expressed in the waste bag, in which material no longer needed for the mature sperm is eliminated. Not expressed in the stem cells and spermatogonial cells.

The protein resides in the nucleus. The protein localises to the chromosome. Functionally, probably participates in various redox reactions through the reversible oxidation of its active center dithiol to a disulfide and catalyzes dithiol-disulfide exchange reactions. Its tissue specificity suggests a regulatory role in the germline. In Drosophila melanogaster (Fruit fly), this protein is Thioredoxin-T (TrxT).